Consider the following 86-residue polypeptide: Large ribosomal subunit protein bL28 (86 aa).

It belongs to the bacterial ribosomal protein bL28 family.

The chain is Large ribosomal subunit protein bL28 from Phocaeicola vulgatus (strain ATCC 8482 / DSM 1447 / JCM 5826 / CCUG 4940 / NBRC 14291 / NCTC 11154) (Bacteroides vulgatus).